The following is a 754-amino-acid chain: uncharacterized protein (754 aa).

10 helical membrane-spanning segments follow: residues Ile-3–Leu-23, Pro-24–Val-44, Ile-50–Ala-70, His-223–Ile-243, Trp-254–Leu-274, Val-320–Trp-340, Leu-370–Ala-390, Leu-392–Val-412, Trp-446–Val-466, and Ala-471–Trp-491.

The protein to B.subtilis ComEC, N.gonorrhoeae ComA, and H.influenzae Rec2.

It localises to the cell membrane. This is an uncharacterized protein from Escherichia coli (strain K12).